The following is a 1030-amino-acid chain: Teashirt homolog 2 (1030 aa).

The segment at 1-120 is disordered; it reads MPRRKQQAPK…THPKLPSEPH (120 aa). A coiled-coil region spans residues 11 to 42; sequence RAAGYAQEEVLKEEEEIKEEEEEEEDSGSVAQ. A compositionally biased stretch (acidic residues) spans 21 to 37; that stretch reads LKEEEEIKEEEEEEEDS. Composition is skewed to polar residues over residues 39–49 and 66–95; these read SVAQHQSSNDT and SCQN…QVSD. The segment covering 103 to 120 has biased composition (basic and acidic residues); the sequence is DVSDKKANTHPKLPSEPH. A Glycyl lysine isopeptide (Lys-Gly) (interchain with G-Cter in SUMO2) cross-link involves residue Lys-189. C2H2-type zinc fingers lie at residues 216–240 and 276–300; these read FRCR…ETGH and LKCM…KTKH. The segment at 240–266 is disordered; sequence HYQDDNRKKDKLRPTSYSKPRKRAFQD. Glycyl lysine isopeptide (Lys-Gly) (interchain with G-Cter in SUMO2) cross-links involve residues Lys-307 and Lys-316. The segment at 328–348 is disordered; that stretch reads VNRPCSPDSTTGSLADSFSSQ. Residues 334 to 348 show a composition bias toward polar residues; the sequence is PDSTTGSLADSFSSQ. A C2H2-type 3; atypical zinc finger spans residues 381–405; that stretch reads LKCMECGSSHDTLQQLTTHMMVTGH. Lys-418 participates in a covalent cross-link: Glycyl lysine isopeptide (Lys-Gly) (interchain with G-Cter in SUMO2). Over residues 432–459 the composition is skewed to polar residues; that stretch reads SLSETPNSESLAPKPSSNSPSECTASTT. A disordered region spans residues 432-488; sequence SLSETPNSESLAPKPSSNSPSECTASTTELKKESKKEKGEGIEDEQGVKSEDYEDSL. The segment covering 460–482 has biased composition (basic and acidic residues); it reads ELKKESKKEKGEGIEDEQGVKSE. Residues Lys-462, Lys-480, Lys-497, and Lys-601 each participate in a glycyl lysine isopeptide (Lys-Gly) (interchain with G-Cter in SUMO2) cross-link. 2 stretches are compositionally biased toward basic and acidic residues: residues 608 to 623 and 633 to 664; these read DEVV…HEEA and SFSK…KPEP. 3 disordered regions span residues 608–687, 703–726, and 759–784; these read DEVV…LPSI, KATE…VFHK, and QPID…SPPQ. A Glycyl lysine isopeptide (Lys-Gly) (interchain with G-Cter in SUMO2) cross-link involves residue Lys-652. The span at 710-722 shows a compositional bias: low complexity; it reads SPSCSSPNSSTSP. Residues 773–783 are compositionally biased toward polar residues; sequence SSQAQSCTSPP. Glycyl lysine isopeptide (Lys-Gly) (interchain with G-Cter in SUMO2) cross-links involve residues Lys-796 and Lys-816. Positions 837-907 form a DNA-binding region, homeobox; the sequence is RKGRQSNWNP…NVKYQLRKTG (71 aa). The segment at 922–944 adopts a C2H2-type 4 zinc-finger fold; sequence FYCSDCASQFRTPSTYISHLESH. Lys-962 is covalently cross-linked (Glycyl lysine isopeptide (Lys-Gly) (interchain with G-Cter in SUMO2)). 2 disordered regions span residues 965 to 987 and 1009 to 1030; these read QEIS…EDTD and LSKT…VDEE. A compositionally biased stretch (polar residues) spans 968-977; the sequence is SRVSSAQRSP. Ser-976 carries the post-translational modification Phosphoserine. The C2H2-type 5 zinc finger occupies 990-1013; sequence FKCKLCRRTFVSKHAVKLHLSKTH.

It belongs to the teashirt C2H2-type zinc-finger protein family. In terms of assembly, interacts (via homeobox domain) with APBB1 (via PID domain 1). Post-translationally, sumoylated.

It localises to the nucleus. Functionally, probable transcriptional regulator involved in developmental processes. May act as a transcriptional repressor (Potential). This is Teashirt homolog 2 (Tshz2) from Mus musculus (Mouse).